The following is a 908-amino-acid chain: Bifunctional uridylyltransferase/uridylyl-removing enzyme (908 aa).

Residues 1 to 360 form a uridylyltransferase region; the sequence is MFDTPAVFAR…LERIFRRRRR (360 aa). The uridylyl-removing stretch occupies residues 361-718; the sequence is IKQGYKVVRG…LDPDEDRDAT (358 aa). An HD domain is found at 477–599; the sequence is VDEHTIQTIV…VQTTKRLDLL (123 aa). 2 consecutive ACT domains span residues 719-801 and 829-904; these read RACF…LKSR and IIEV…GAER.

This sequence belongs to the GlnD family. Mg(2+) is required as a cofactor.

It carries out the reaction [protein-PII]-L-tyrosine + UTP = [protein-PII]-uridylyl-L-tyrosine + diphosphate. The catalysed reaction is [protein-PII]-uridylyl-L-tyrosine + H2O = [protein-PII]-L-tyrosine + UMP + H(+). Uridylyltransferase (UTase) activity is inhibited by glutamine, while glutamine activates uridylyl-removing (UR) activity. Modifies, by uridylylation and deuridylylation, the PII regulatory proteins (GlnB and homologs), in response to the nitrogen status of the cell that GlnD senses through the glutamine level. Under low glutamine levels, catalyzes the conversion of the PII proteins and UTP to PII-UMP and PPi, while under higher glutamine levels, GlnD hydrolyzes PII-UMP to PII and UMP (deuridylylation). Thus, controls uridylylation state and activity of the PII proteins, and plays an important role in the regulation of nitrogen assimilation and metabolism. The sequence is that of Bifunctional uridylyltransferase/uridylyl-removing enzyme from Ruegeria pomeroyi (strain ATCC 700808 / DSM 15171 / DSS-3) (Silicibacter pomeroyi).